The primary structure comprises 141 residues: Nucleoside diphosphate kinase (141 aa).

Residues lysine 11, phenylalanine 59, arginine 87, threonine 93, arginine 104, and asparagine 114 each contribute to the ATP site. The active-site Pros-phosphohistidine intermediate is histidine 117.

Belongs to the NDK family. Homotetramer. Requires Mg(2+) as cofactor.

It localises to the cytoplasm. The enzyme catalyses a 2'-deoxyribonucleoside 5'-diphosphate + ATP = a 2'-deoxyribonucleoside 5'-triphosphate + ADP. It carries out the reaction a ribonucleoside 5'-diphosphate + ATP = a ribonucleoside 5'-triphosphate + ADP. In terms of biological role, major role in the synthesis of nucleoside triphosphates other than ATP. The ATP gamma phosphate is transferred to the NDP beta phosphate via a ping-pong mechanism, using a phosphorylated active-site intermediate. The polypeptide is Nucleoside diphosphate kinase (Pseudomonas entomophila (strain L48)).